Reading from the N-terminus, the 234-residue chain is Myelin protein zero-like protein 3 (234 aa).

The signal sequence occupies residues 1 to 31 (MQQSGVPGSRGCALCPLLGVLFFQGVYVIFS). The Ig-like V-type domain maps to 32–148 (LEIKADAHVR…NIPATELTVT (117 aa)). Over 32 to 158 (LEIKADAHVR…ERGFGTMLSS (127 aa)) the chain is Extracellular. Cys52 and Cys128 are oxidised to a cystine. Asn123 carries an N-linked (GlcNAc...) asparagine glycan. The helical transmembrane segment at 159–179 (VALLSILVFIPSTVVVILLLV) threads the bilayer. Topologically, residues 180–234 (RMGRKSAGLKKRSKSGYKKSSIEVSDDTDQEGDDCMAKLCVRCAECVDSDYEETY) are cytoplasmic.

It belongs to the myelin P0 protein family.

The protein resides in the membrane. In terms of biological role, mediates homophilic cell-cell adhesion. This is Myelin protein zero-like protein 3 (MPZL3) from Bos taurus (Bovine).